A 304-amino-acid chain; its full sequence is Acetylglutamate kinase (304 aa).

Substrate contacts are provided by residues 72-73, Arg-94, and Asn-199; that span reads GG.

Belongs to the acetylglutamate kinase family. ArgB subfamily.

The protein resides in the cytoplasm. It carries out the reaction N-acetyl-L-glutamate + ATP = N-acetyl-L-glutamyl 5-phosphate + ADP. Its pathway is amino-acid biosynthesis; L-arginine biosynthesis; N(2)-acetyl-L-ornithine from L-glutamate: step 2/4. Catalyzes the ATP-dependent phosphorylation of N-acetyl-L-glutamate. This is Acetylglutamate kinase from Methylobacterium nodulans (strain LMG 21967 / CNCM I-2342 / ORS 2060).